We begin with the raw amino-acid sequence, 564 residues long: Probable cysteine--tRNA ligase, mitochondrial (564 aa).

C78 provides a ligand contact to Zn(2+). G79 is a binding site for L-cysteine. The 'HIGH' region signature appears at 80–90; it reads PTVYDHAHLGH. Residue T119 participates in L-cysteine binding. Positions 124 to 127 match the 'KIIK' region motif; the sequence is KIIK. Residues C257, H282, and E286 each coordinate Zn(2+). Position 282 (H282) interacts with L-cysteine. The short motif at 317 to 321 is the 'KMSKS' region element; sequence KMSKS. Position 320 (K320) interacts with ATP.

Belongs to the class-I aminoacyl-tRNA synthetase family. Requires Zn(2+) as cofactor.

It localises to the mitochondrion. It catalyses the reaction tRNA(Cys) + L-cysteine + ATP = L-cysteinyl-tRNA(Cys) + AMP + diphosphate. The enzyme catalyses 2 L-cysteine = S-sulfanyl-L-cysteine + L-alanine. The catalysed reaction is S-sulfanyl-L-cysteine + L-cysteine = S-disulfanyl-L-cysteine + L-alanine. It carries out the reaction S-sulfanyl-L-cysteine + tRNA(Cys) + ATP = (S)-sulfanyl-L-cysteinyl-tRNA(Cys) + AMP + diphosphate. It catalyses the reaction S-disulfanyl-L-cysteine + tRNA(Cys) + ATP = (S)-disulfanyl-L-cysteinyl-tRNA(Cys) + AMP + diphosphate. Functionally, mitochondrial cysteine-specific aminoacyl-tRNA synthetase that catalyzes the ATP-dependent ligation of cysteine to tRNA(Cys). In addition to its role as an aminoacyl-tRNA synthetase, has also cysteine persulfide synthase activity. Produces reactive persulfide species such as cysteine persulfide (CysSSH) from substrate cysteine and mediate direct incorporation of CysSSH into proteins during translations, resulting in protein persulfides and polysulfides. CysSSHs behave as potent antioxidants and cellular protectants. The polypeptide is Probable cysteine--tRNA ligase, mitochondrial (Homo sapiens (Human)).